The following is an 83-amino-acid chain: Small ribosomal subunit protein uS17 (83 aa).

This sequence belongs to the universal ribosomal protein uS17 family. In terms of assembly, part of the 30S ribosomal subunit.

One of the primary rRNA binding proteins, it binds specifically to the 5'-end of 16S ribosomal RNA. The polypeptide is Small ribosomal subunit protein uS17 (Chlamydia muridarum (strain MoPn / Nigg)).